The sequence spans 953 residues: MCSPEEAALLRLEEVFSATLARINSLVFQPLLEAGPEASDPWGRECLQLLQQLHSSSQQLWDVMEESLHSLRERLRRPEAVGLESLLLLQSADRVLQVHLEYIESYTCCVAVQAFQKAVKRRSEYWRGQRKALRQVLSGLSSEGSVGTALLQALRQPLAHHVQQYVLLLLSLGDTVGECHPTRELVIHAASLFGDLQSFMRQELDQATATQALWPTLSSRLRDVLCTPARRLLQDSQDVPVTVTPLRAERVLLFDDALVLLQGHNIHTFDLKLVWVEPGQDRCTFHLLTPEEGFSFCSKDPQGLVVWQWKVTQAVCQALRGKKDFPVLGAGLEPSEPPTCRCGAYTFHAEGRFCQATYEGEWYWGRPHGKGTLKWPDGRNHVGDFCQGLEHGFGIRLVPQASEDKFDCYKCHWWEGSMCGYGICEYSTSEVYKGYFQEGLRHGFGVLESAPQAPRPLRYTGHWERGQRSGYGVEEDSDRGERYIGMWQADQRHGPGVMVTQAGVCYQGTFQADKMVGPGILLSDDDSLYEGTFTRDLTLVGKGKVTFPNGFTLEGSFGSVSGRGLHTQGVLDTAALPPDPSSTCKRQLGQGVFPVESRWQGVYGAFRDFVRAGCPGDLREALLGFHVQSSRELRKSQEYLCCERTCPEDQAGRMEDLLEELLQHREPEALQQCLRKALSNSLHPLGKLLRTLMLTFQATYAGIGANKHLQGLAQEEVKQHAQELWAAYRGLLQVALQRKGQAPEEDEDAETRDLRVHSLVLPLVLPSFYSELFTLYLLLHEREDSLYSQGITHLSLFPDARLLEFLDVQKHLWPLKDLTLTTNQRYSLVRDKCFLSATECLQKMITTVDPREKLEVLERTYGEIEATVSRVLGREHKLPMDDLLPLLIYVVSRAQIQHLGAEIHLIRDMMDPLHTGGLYDFLLTALESCYEHIQKEDMRLHRLPSRWSSREPW.

8 MORN repeats span residues tyrosine 358–asparagine 380, histidine 381–glutamate 403, tyrosine 409–valine 431, tyrosine 432–proline 454, tyrosine 459–glutamate 481, tyrosine 483–cysteine 505, tyrosine 506–leucine 528, and tyrosine 529–threonine 552. Residues leucine 796–arginine 942 enclose the VPS9 domain.

In terms of assembly, homodimer. Forms a heteromeric complex with ALS2. Interacts with ALS2 and RAB5A.

It localises to the cytoplasm. Its function is as follows. Acts as a guanine nucleotide exchange factor (GEF) for Rab5 GTPase. Regulates the ALS2-mediated endosome dynamics. This Bos taurus (Bovine) protein is ALS2 C-terminal-like protein (ALS2CL).